The sequence spans 117 residues: Large ribosomal subunit protein bL19 (117 aa).

Belongs to the bacterial ribosomal protein bL19 family.

Functionally, this protein is located at the 30S-50S ribosomal subunit interface and may play a role in the structure and function of the aminoacyl-tRNA binding site. In Mycoplasmopsis pulmonis (strain UAB CTIP) (Mycoplasma pulmonis), this protein is Large ribosomal subunit protein bL19.